A 175-amino-acid polypeptide reads, in one-letter code: B9 domain-containing protein 2 (175 aa).

The C2 B9-type domain occupies 2 to 118 (AEVHVIGQII…DCPTWRPLGS (117 aa)).

It belongs to the B9D family. In terms of assembly, part of the tectonic-like complex (also named B9 complex). Interacts with TUBG1. In terms of tissue distribution, highest expression in thymus and skeletal muscle. Also expressed in spleen, kidney, lung, heart, microglia and liver. Detected in brain (at protein level).

It is found in the cytoplasm. It localises to the cytoskeleton. The protein resides in the cilium basal body. Its subcellular location is the cilium axoneme. The protein localises to the nucleus. Its function is as follows. Component of the tectonic-like complex, a complex localized at the transition zone of primary cilia and acting as a barrier that prevents diffusion of transmembrane proteins between the cilia and plasma membranes. The protein is B9 domain-containing protein 2 (B9d2) of Mus musculus (Mouse).